The following is a 479-amino-acid chain: Serralysin C (479 aa).

The propeptide occupies 1-17; sequence MGKNLSLRQDDAQHALS. His188 lines the Zn(2+) pocket. Glu189 is a catalytic residue. Residues His192 and Tyr228 each contribute to the Zn(2+) site. Ca(2+)-binding residues include Arg265, Gly267, Asp297, Gly299, Gly300, Asp302, Thr339, Glu341, Gly346, Gly348, Asp350, Asn355, Ala357, Asn359, Gly363, Gly364, Ala365, Gly366, Asp368, Gly372, Gly373, Gly375, Asp377, Gly381, Gly382, Ala383, Gly384, Asp386, Asp395, Asp402, and Asp412. Hemolysin-type calcium-binding repeat units lie at residues 344 to 361, 362 to 379, and 380 to 397; these read IGGS…DNIL, QGGA…ADTL, and YGGA…QDST.

This sequence belongs to the peptidase M10B family. Ca(2+) serves as cofactor. Requires Zn(2+) as cofactor.

It is found in the secreted. The catalysed reaction is Preferential cleavage of bonds with hydrophobic residues in P1'.. This is Serralysin C (prtC) from Dickeya chrysanthemi (Pectobacterium chrysanthemi).